The sequence spans 266 residues: 3-methyl-2-oxobutanoate hydroxymethyltransferase (266 aa).

Positions 45 and 84 each coordinate Mg(2+). 3-methyl-2-oxobutanoate is bound by residues 45 to 46, Asp-84, and Lys-112; that span reads DS. Residue Glu-114 coordinates Mg(2+). Glu-181 functions as the Proton acceptor in the catalytic mechanism.

This sequence belongs to the PanB family. As to quaternary structure, homodecamer; pentamer of dimers. Requires Mg(2+) as cofactor.

The protein localises to the cytoplasm. It carries out the reaction 3-methyl-2-oxobutanoate + (6R)-5,10-methylene-5,6,7,8-tetrahydrofolate + H2O = 2-dehydropantoate + (6S)-5,6,7,8-tetrahydrofolate. The protein operates within cofactor biosynthesis; (R)-pantothenate biosynthesis; (R)-pantoate from 3-methyl-2-oxobutanoate: step 1/2. Functionally, catalyzes the reversible reaction in which hydroxymethyl group from 5,10-methylenetetrahydrofolate is transferred onto alpha-ketoisovalerate to form ketopantoate. In Pseudomonas fluorescens (strain Pf0-1), this protein is 3-methyl-2-oxobutanoate hydroxymethyltransferase.